Consider the following 819-residue polypeptide: DNA topoisomerase 4 subunit A (819 aa).

The Topo IIA-type catalytic domain maps to 30–496; the sequence is LPDIRDGLKP…QIIEIDTASL (467 aa). Catalysis depends on Tyr-118, which acts as the O-(5'-phospho-DNA)-tyrosine intermediate.

Belongs to the type II topoisomerase GyrA/ParC subunit family. ParC type 2 subfamily. As to quaternary structure, heterotetramer composed of ParC and ParE.

It localises to the cell membrane. It catalyses the reaction ATP-dependent breakage, passage and rejoining of double-stranded DNA.. Topoisomerase IV is essential for chromosome segregation. It relaxes supercoiled DNA. Performs the decatenation events required during the replication of a circular DNA molecule. The sequence is that of DNA topoisomerase 4 subunit A from Streptococcus pyogenes serotype M3 (strain ATCC BAA-595 / MGAS315).